A 208-amino-acid polypeptide reads, in one-letter code: Outer-membrane lipoprotein carrier protein (208 aa).

The N-terminal stretch at 1-22 (MKNLLCAVMLTSPLLYSTAVFA) is a signal peptide.

Belongs to the LolA family. As to quaternary structure, monomer.

Its subcellular location is the periplasm. Its function is as follows. Participates in the translocation of lipoproteins from the inner membrane to the outer membrane. Only forms a complex with a lipoprotein if the residue after the N-terminal Cys is not an aspartate (The Asp acts as a targeting signal to indicate that the lipoprotein should stay in the inner membrane). The chain is Outer-membrane lipoprotein carrier protein from Shewanella sp. (strain W3-18-1).